We begin with the raw amino-acid sequence, 507 residues long: ATP synthase subunit alpha, chloroplastic (507 aa).

170–177 (GDRQTGKT) is an ATP binding site.

The protein belongs to the ATPase alpha/beta chains family. As to quaternary structure, F-type ATPases have 2 components, CF(1) - the catalytic core - and CF(0) - the membrane proton channel. CF(1) has five subunits: alpha(3), beta(3), gamma(1), delta(1), epsilon(1). CF(0) has four main subunits: a, b, b' and c.

Its subcellular location is the plastid. The protein resides in the chloroplast thylakoid membrane. It catalyses the reaction ATP + H2O + 4 H(+)(in) = ADP + phosphate + 5 H(+)(out). In terms of biological role, produces ATP from ADP in the presence of a proton gradient across the membrane. The alpha chain is a regulatory subunit. The protein is ATP synthase subunit alpha, chloroplastic of Ceratophyllum demersum (Rigid hornwort).